The primary structure comprises 102 residues: ATP-dependent Clp protease adapter protein ClpS (102 aa).

It belongs to the ClpS family. Binds to the N-terminal domain of the chaperone ClpA.

Functionally, involved in the modulation of the specificity of the ClpAP-mediated ATP-dependent protein degradation. This Shewanella sediminis (strain HAW-EB3) protein is ATP-dependent Clp protease adapter protein ClpS.